A 106-amino-acid polypeptide reads, in one-letter code: Immunity protein CdiI (106 aa).

In terms of assembly, forms a contact-dependent growth inhibition complex of CdiA-CT-NC101, CdiI-NC101 and EF-Tu; the complex is a dimer of heterotrimers.

Immunity protein component of a toxin-immunity protein module, which functions as a cellular contact-dependent growth inhibition (CDI) system. CDI modules allow bacteria to communicate with and inhibit the growth of closely related neighboring bacteria in a contact-dependent fashion. Neutralizes the toxic activity of cognate toxin CdiA-NC101 (the C-terminal 154 residue CT fragment). Does not inhibit toxic activity of CdiA from other toxin-immunity modules or strains of E.coli. Mediates dimerization of the ternary CdiA-CT-NC101, CdiI-NC101 and EF-Tu complex; both CdiI molecules contact both EF-Tu molecules. This is Immunity protein CdiI from Escherichia coli (strain NC101).